A 141-amino-acid polypeptide reads, in one-letter code: MAIILGADAHGNALKELIKSFLQEEGYDIIDVTDINSDFIDNTLAVAKAINEAEGRLGIMVDAYGAGPFMVATKLKGMVAAEVSDERSAYMTRGHNNARMITIGAEIVGPELAKNIVKGFVTGPYDGGRHQIRVDMLNKMA.

This sequence belongs to the LacAB/RpiB family. In terms of assembly, heteromultimeric protein consisting of LacA and LacB.

It carries out the reaction aldehydo-D-galactose 6-phosphate = keto-D-tagatose 6-phosphate. It participates in carbohydrate metabolism; D-galactose 6-phosphate degradation; D-tagatose 6-phosphate from D-galactose 6-phosphate: step 1/1. The sequence is that of Galactose-6-phosphate isomerase subunit LacA 1 from Streptococcus pyogenes serotype M6 (strain ATCC BAA-946 / MGAS10394).